The following is a 694-amino-acid chain: Protein NPGR1 (694 aa).

The interval 12-40 (FEDQPGSPESLATRDFSASGLSSRNGGGD) is disordered. TPR repeat units follow at residues 32-65 (LSSR…SLNY), 66-101 (EEAR…TPRI), 135-168 (LEAI…VENA), 188-221 (QKAL…PWNL), 307-340 (GERW…SESR), 551-584 (TEAW…CYYS), 585-618 (PRGW…EPDH), 620-654 (PSIV…DPRN), and 655-688 (HDAW…ELSA).

As to quaternary structure, interacts with calmodulin in a calcium-dependent manner. As to expression, expressed in pollen, flowers, fruits and leaves.

The chain is Protein NPGR1 from Arabidopsis thaliana (Mouse-ear cress).